The chain runs to 39 residues: Mu-theraphotoxin-Ae1a (39 aa).

Disulfide bonds link cysteine 7–cysteine 21, cysteine 14–cysteine 26, and cysteine 20–cysteine 33. Residue phenylalanine 39 is modified to Phenylalanine amide.

The protein belongs to the neurotoxin 10 (Hwtx-1) family. 47 subfamily. Expressed by the venom gland.

It is found in the secreted. In terms of biological role, insecticidal toxin that acts, at least partially, by inhibiting insect voltage-gated sodium (NaV) channels of several insect species. The toxin binds to the voltage sensor in NaV channel domain II and inhibits channel opening by shifting the threshold for channel activation to more positive voltages. The toxin binding is sensitive to residues in the S1-S2 loop of the domain II voltage sensor. In vivo, the recombinant toxin causes paralysis and/or death to two dipteran species (Lucilia cuprina and Drosophila melanogaster). In contrast, the toxin does not show paralytic or lethal effect on the cotton bollworm Helicoverpa armigera and the triatomine bug Rhodinius prolixus. The polypeptide is Mu-theraphotoxin-Ae1a (Augacephalus ezendami (Mozambique baboon spider)).